A 320-amino-acid polypeptide reads, in one-letter code: MSNARPQAGEKLRDDEKVKHIPITIMPTEKAEMLRKPEWIKIRLPRTTDRIDHIKKTLRKNNLHSVCEEASCPNLAECFNHGTATFMILGDICTRRCPFCDVAHGKPLPPSAEEPVKLAKTIAEMQLKYVVITSVDRDDLRDGGAQHFVDCINAIREHSPTTKIEVLVPDFRGRMDKALEILKNGVPDVFNHNLETIPRLYRECRPGANYQWSLDLLKKFKEQHPDIPTKSGLMMGMGENKEEIAEVLKDLRAHNVEMLTLGQYLQPSKHHFPLKRYVHPTEFDELGVIAKEIGFTHAACGPMVRSSYHADKQAAGVEVK.

Cys-67, Cys-72, Cys-78, Cys-93, Cys-97, Cys-100, and Ser-307 together coordinate [4Fe-4S] cluster. In terms of domain architecture, Radical SAM core spans Phe-79–Thr-296.

Belongs to the radical SAM superfamily. Lipoyl synthase family. Requires [4Fe-4S] cluster as cofactor.

Its subcellular location is the cytoplasm. The catalysed reaction is [[Fe-S] cluster scaffold protein carrying a second [4Fe-4S](2+) cluster] + N(6)-octanoyl-L-lysyl-[protein] + 2 oxidized [2Fe-2S]-[ferredoxin] + 2 S-adenosyl-L-methionine + 4 H(+) = [[Fe-S] cluster scaffold protein] + N(6)-[(R)-dihydrolipoyl]-L-lysyl-[protein] + 4 Fe(3+) + 2 hydrogen sulfide + 2 5'-deoxyadenosine + 2 L-methionine + 2 reduced [2Fe-2S]-[ferredoxin]. It functions in the pathway protein modification; protein lipoylation via endogenous pathway; protein N(6)-(lipoyl)lysine from octanoyl-[acyl-carrier-protein]: step 2/2. Its function is as follows. Catalyzes the radical-mediated insertion of two sulfur atoms into the C-6 and C-8 positions of the octanoyl moiety bound to the lipoyl domains of lipoate-dependent enzymes, thereby converting the octanoylated domains into lipoylated derivatives. In Pseudoalteromonas atlantica (strain T6c / ATCC BAA-1087), this protein is Lipoyl synthase.